The following is a 238-amino-acid chain: Peroxisomal coenzyme A diphosphatase NUDT7 (238 aa).

Position 20 is an N6-succinyllysine (K20). The Nudix hydrolase domain occupies 37-172 (YNKYSVLLPL…VTRLGHRFIN (136 aa)). The short motif at 77–98 (KRDPTDMDDAATALREAQEEVG) is the Nudix box element. Residues E92 and E96 each coordinate Mg(2+). The short motif at 236–238 (SRL) is the Microbody targeting signal element.

Belongs to the Nudix hydrolase family. PCD1 subfamily. In terms of assembly, monomer. Mn(2+) is required as a cofactor. It depends on Mg(2+) as a cofactor. As to expression, expressed in liver, kidney, pancreas, pituitary, small intestine, spleen, heart and placenta. Weakly expressed in brain.

The protein resides in the peroxisome. The catalysed reaction is hexanoyl-CoA + H2O = hexanoyl-4'-phosphopantetheine + adenosine 3',5'-bisphosphate + 2 H(+). The enzyme catalyses octanoyl-CoA + H2O = S-octanoyl-4'-phosphopantetheine + adenosine 3',5'-bisphosphate + 2 H(+). It catalyses the reaction butanoyl-CoA + H2O = S-butanoyl-4'-phosphopantetheine + adenosine 3',5'-bisphosphate + 2 H(+). It carries out the reaction decanoyl-CoA + H2O = decanoyl-4'-phosphopantetheine + adenosine 3',5'-bisphosphate + 2 H(+). The catalysed reaction is dodecanoyl-CoA + H2O = S-dodecanoyl-4'-phosphopantetheine + adenosine 3',5'-bisphosphate + 2 H(+). The enzyme catalyses tetradecanoyl-CoA + H2O = tetradecanoyl-4'-phosphopantetheine + adenosine 3',5'-bisphosphate + 2 H(+). It catalyses the reaction choloyl-CoA + H2O = S-choloyl-4'-phosphopantetheine + adenosine 3',5'-bisphosphate + 2 H(+). It carries out the reaction 3alpha,7alpha,12alpha-trihydroxy-5beta-cholestan-26-oyl-CoA + H2O = 3alpha,7alpha,12alpha-trihydroxy-5beta-cholestan-26-oyl-4'-phosphopantetheine + adenosine 3',5'-bisphosphate + 2 H(+). The catalysed reaction is acetyl-CoA + H2O = S-acetyl-4'-phosphopantetheine + adenosine 3',5'-bisphosphate + 2 H(+). The enzyme catalyses CoA + H2O = (R)-4'-phosphopantetheine + adenosine 3',5'-bisphosphate + 2 H(+). It catalyses the reaction propanoyl-CoA + H2O = propanoyl-4'-phosphopantetheine + adenosine 3',5'-bisphosphate + 2 H(+). It carries out the reaction malonyl-CoA + H2O = malonyl-4'-phosphopantetheine + adenosine 3',5'-bisphosphate + 2 H(+). The catalysed reaction is succinyl-CoA + H2O = succinyl-4'-phosphopantetheine + adenosine 3',5'-bisphosphate + 2 H(+). The enzyme catalyses a 5'-end CoA-ribonucleoside in mRNA + H2O = a 5'-end phospho-adenosine-phospho-ribonucleoside in mRNA + (R)-4'-phosphopantetheine + 2 H(+). Its activity is regulated as follows. Inhibited by fluoride. Its function is as follows. Fatty acyl-coenzyme A (CoA) diphosphatase that hydrolyzes fatty acyl-CoA to yield acyl-4'-phosphopantetheine and adenosine 3',5'-bisphosphate. Cleaves CoA, CoA esters and oxidized CoA with similar efficiencies. Preferentially hydrolyzes medium-chain acyl-CoAs and bile acid-CoAs. Has no activity toward NDP-sugars, CDP-alcohols, (deoxy)nucleoside 5'-triphosphates, nucleoside 5'-di or monophosphates, diadenosine polyphosphates, NAD, NADH, NADP, NADPH or thymidine-5'-monophospho-p-nitrophenyl ester. May be required to eliminate oxidized CoA from peroxisomes, or regulate CoA and acyl-CoA levels in this organelle in response to metabolic demand. Does not play a role in U8 snoRNA decapping activity. Binds U8 snoRNA. Exhibits decapping activity towards dpCoA-capped RNAs in vitro. The protein is Peroxisomal coenzyme A diphosphatase NUDT7 of Homo sapiens (Human).